A 636-amino-acid polypeptide reads, in one-letter code: MKSQQEQHFDYVKIGIASPERVRQWGERTLPNGQTVGEVTKPETINYRTLKPEMDGLFCERIFGPAKDWECHCGKYKRVRHRGIVCERCGVEVTESRVRRHRMGYIKLAAAVTHVWYLKGIPSYLSILLDMALRDVEQIVYFNAYVVLDPGNATNLSYKQLLTEDQWLEIEEQLYSEDSQLEDVEVGIGAEAIERLLQELELEAVAEELREGIANSKGQKRAKLIKRLRVIDNFIATGARPEWMVLNSIPVIPPDLRPMVQLDGGRFATSDLNDLYRRVINRNNRLARLQEILAPEIIVRNEKRMLQEAVDALIDNGRRGRTVVGANNRPLKSLSDIIEGKQGRFRQNLLGKRVDYSGRSVIVVGPKLKIYQCGLPREMAIELFQPFVIQRLIKSTIVSNIKAAKKLIQRGDESVWDVLAEVITGHPVLLNRAPTLHRLGIQAFEPILVEGRAIQLHPLVCPAFNADFDGDQMAVHVPLSLEAQAEARLLMLACHNILSPATGKPIVAPSQDMVLGCYYLTAENPGAQRGAGRYFSSMDDALRAYEQGDVDLHAYVWLRYLGDVETNEADDRVLESETLEDGSILKIYRERKVRETAEGEMISQFIRTTPGRIIYNKTIQDALDLTERTLPEGLPV.

Residues Cys71, Cys73, Cys86, and Cys89 each contribute to the Zn(2+) site. 3 residues coordinate Mg(2+): Asp467, Asp469, and Asp471.

Belongs to the RNA polymerase beta' chain family. RpoC1 subfamily. As to quaternary structure, in cyanobacteria the RNAP catalytic core is composed of 2 alpha, 1 beta, 1 beta', 1 gamma and 1 omega subunit. When a sigma factor is associated with the core the holoenzyme is formed, which can initiate transcription. It depends on Mg(2+) as a cofactor. Zn(2+) is required as a cofactor.

The catalysed reaction is RNA(n) + a ribonucleoside 5'-triphosphate = RNA(n+1) + diphosphate. Its function is as follows. DNA-dependent RNA polymerase catalyzes the transcription of DNA into RNA using the four ribonucleoside triphosphates as substrates. The sequence is that of DNA-directed RNA polymerase subunit gamma from Picosynechococcus sp. (strain ATCC 27264 / PCC 7002 / PR-6) (Agmenellum quadruplicatum).